A 421-amino-acid polypeptide reads, in one-letter code: ATP-dependent RNA helicase RhlB (421 aa).

The short motif at 9-37 (QKFSDFALHPKVVEALEKKGFHNCTPIQA) is the Q motif element. The 180-residue stretch at 40–219 (LPLTLAGRDV…FEQMNNAEYI (180 aa)) folds into the Helicase ATP-binding domain. 53–60 (AQTGTGKT) provides a ligand contact to ATP. A DEAD box motif is present at residues 165-168 (DEAD). One can recognise a Helicase C-terminal domain in the interval 245–390 (RLLQTLIEEE…VSKYNPDALM (146 aa)). A disordered region spans residues 392–421 (DLPKPLRLTRPRTGNGPRRTGAPRNRRRSG). Low complexity predominate over residues 402-414 (PRTGNGPRRTGAP).

Belongs to the DEAD box helicase family. RhlB subfamily. As to quaternary structure, component of the RNA degradosome, which is a multiprotein complex involved in RNA processing and mRNA degradation.

It localises to the cytoplasm. It carries out the reaction ATP + H2O = ADP + phosphate + H(+). DEAD-box RNA helicase involved in RNA degradation. Has RNA-dependent ATPase activity and unwinds double-stranded RNA. This Escherichia coli (strain SMS-3-5 / SECEC) protein is ATP-dependent RNA helicase RhlB.